A 526-amino-acid chain; its full sequence is MSKVAIIDFGSQFTQLLARRIRELNVYCEIFTPDVEFDLVKDSKAFILSGGPKSVASLAEIPKIVHNIIELNKKSSIPVLGICYGLQLLSNYFNSAIVSDCSKEFGKATLNIIKESEITKNVWEVGKRVDVWMSHADSVYNVPRGFEVIAYSVLKNVIAMICNEERKIYGMQFHPEVYHTTDGIALLSNFIKIAGCKTDWTMNSFLDEQQRVIKKQVGDKKVIAAISGGVDSSVAAALTYRAIGDQLHCIFIDNGLLRYNEAEKISQLLVNQFQMPITIVDKSSVFLNKLKSITDPEQKRKIIGKTFIEVFEGEANKIGGVEFLMQGTIYPDVIESGGAVGKESVTIKSHHNVGGLPDVMRLQLVEPLKLLFKDEVRLLGKELGISDEILMRHPFPGPGLAIRIIGEVTQEKIKMLQAADDIYINLIKKYNLYNIIWQAFAVILPVKTVGVMGDSRTYGYTCALRAVTSSDGMTAGCFPFGVDTDTKLIFYEFLQEVSNAIVNNVDGINRVVYDTTSKPPATIEWE.

In terms of domain architecture, Glutamine amidotransferase type-1 spans 3–199 (KVAIIDFGSQ…FIKIAGCKTD (197 aa)). C83 acts as the Nucleophile in catalysis. Active-site residues include H174 and E176. Positions 200–392 (WTMNSFLDEQ…LGISDEILMR (193 aa)) constitute a GMPS ATP-PPase domain. Position 227–233 (227–233 (SGGVDSS)) interacts with ATP.

In terms of assembly, homodimer.

It carries out the reaction XMP + L-glutamine + ATP + H2O = GMP + L-glutamate + AMP + diphosphate + 2 H(+). The protein operates within purine metabolism; GMP biosynthesis; GMP from XMP (L-Gln route): step 1/1. Functionally, catalyzes the synthesis of GMP from XMP. This is GMP synthase [glutamine-hydrolyzing] from Ehrlichia canis (strain Jake).